The primary structure comprises 144 residues: Kunitz-type elastase inhibitor BrEI (144 aa).

N-linked (GlcNAc...) asparagine glycosylation is present at Asn38. Residues Cys41 and Cys88 are joined by a disulfide bond.

Belongs to the leguminous Kunitz-type inhibitor family.

Inhibitor of porcine pancreatic elastase with a Ki of 27 nM. Does not inhibit human neutrophil elastase, bovine trypsin, human plasma kallikrein or porcine pancreatic kallikrein. This Bauhinia rufa (Orchid tree) protein is Kunitz-type elastase inhibitor BrEI.